A 128-amino-acid polypeptide reads, in one-letter code: Fluoride-specific ion channel FluC (128 aa).

The next 4 helical transmembrane spans lie at 5–25, 35–55, 67–87, and 96–116; these read IVAIFVGAGLGALLRWFLSLA, LGTLAANLIGGYVIGIAAVVF, LFVITGFLGGLTTFSTYSVEV, and FGWAFAVAALHLTGSFALTAL. Gly75 and Thr78 together coordinate Na(+).

It belongs to the fluoride channel Fluc/FEX (TC 1.A.43) family.

The protein resides in the cell inner membrane. The enzyme catalyses fluoride(in) = fluoride(out). Na(+) is not transported, but it plays an essential structural role and its presence is essential for fluoride channel function. Its function is as follows. Fluoride-specific ion channel. Important for reducing fluoride concentration in the cell, thus reducing its toxicity. The polypeptide is Fluoride-specific ion channel FluC (Burkholderia lata (strain ATCC 17760 / DSM 23089 / LMG 22485 / NCIMB 9086 / R18194 / 383)).